A 285-amino-acid chain; its full sequence is Bifunctional protein FolD (285 aa).

Residues 165-167 (GRS) and Ser-190 each bind NADP(+).

Belongs to the tetrahydrofolate dehydrogenase/cyclohydrolase family. As to quaternary structure, homodimer.

The enzyme catalyses (6R)-5,10-methylene-5,6,7,8-tetrahydrofolate + NADP(+) = (6R)-5,10-methenyltetrahydrofolate + NADPH. It catalyses the reaction (6R)-5,10-methenyltetrahydrofolate + H2O = (6R)-10-formyltetrahydrofolate + H(+). It participates in one-carbon metabolism; tetrahydrofolate interconversion. In terms of biological role, catalyzes the oxidation of 5,10-methylenetetrahydrofolate to 5,10-methenyltetrahydrofolate and then the hydrolysis of 5,10-methenyltetrahydrofolate to 10-formyltetrahydrofolate. The protein is Bifunctional protein FolD of Staphylococcus saprophyticus subsp. saprophyticus (strain ATCC 15305 / DSM 20229 / NCIMB 8711 / NCTC 7292 / S-41).